A 96-amino-acid polypeptide reads, in one-letter code: Large ribosomal subunit protein uL15 (96 aa).

Belongs to the universal ribosomal protein uL15 family. As to quaternary structure, part of the 50S ribosomal subunit.

In terms of biological role, binds to the 23S rRNA. In Streptomyces scabiei, this protein is Large ribosomal subunit protein uL15 (rplO).